The sequence spans 358 residues: MSRVQCLRLAAVIASISHLIFLVWFVCWNSVLENNEDCVYATRSLAAQVQLGELGANMSTETRLRIRGAAAEPVSVGPFNRSLVYVINSDASLLYSPRETQDGRCFANTFHKTDMAAVMKVYPDGKNVVLVLEMADCMAYLWFFQVRTATAALLMYLAFLCVNRQRRGFGPWLDSASRVSAEAYYLNYWTTLAARVFLKVRYLKLSRFLREIEYRREQTWRQFSIDTLGFYLMHPLALLLRAIETILYFASLVASATVLRVNFDPCSVVLPNHVKVFAWVFVAALGALEVVSAIDHLRRETRSARDAAAVIRPTNIIAACCANIISHVLLRMLYGAALVLVVIGALKYEREIQTRLLG.

An N-terminal signal peptide occupies residues Met-1–Glu-33. The Extracellular portion of the chain corresponds to Asn-34–Leu-141. N-linked (GlcNAc...) asparagine; by host glycosylation is found at Asn-57 and Asn-80. A helical membrane pass occupies residues Trp-142–Val-162. Residues Asn-163–Pro-235 lie on the Cytoplasmic side of the membrane. The chain crosses the membrane as a helical span at residues Leu-236–Ala-256. The Extracellular segment spans residues Thr-257 to His-273. A helical membrane pass occupies residues Val-274–Ile-294. The Cytoplasmic portion of the chain corresponds to Asp-295–Asn-323. The helical transmembrane segment at Ile-324–Gly-344 threads the bilayer. At Ala-345 to Gly-358 the chain is on the extracellular side.

The protein belongs to the alphaherpesvirinae glycoprotein K family. As to quaternary structure, interacts (via UL20 interaction region) with protein UL20 (via N-terminus); this interaction probably plays a role in the coordinate transport of protein UL20 and gK to the trans-Golgi network (TGN), and is required for the cell surface expression of gK.

The protein resides in the host cell membrane. It localises to the host endosome membrane. It is found in the host Golgi apparatus membrane. In terms of biological role, glycoprotein that probably modulates membrane fusion events during secondary envelopment of cytoplasmic capsids that bud into specific trans-Golgi network (TGN)-derived membranes. Also plays a role, together with gB, in virus-induced cell-to-cell fusion (syncytia formation). Seems to block fusion of virions with infected-cell membranes. The chain is Envelope glycoprotein K (gK) from Psittacid herpesvirus 1 (isolate Amazon parrot/-/97-0001/1997) (PsHV-1).